Reading from the N-terminus, the 424-residue chain is D-inositol 3-phosphate glycosyltransferase (424 aa).

Residue His20 participates in 1D-myo-inositol 3-phosphate binding. UDP-N-acetyl-alpha-D-glucosamine is bound by residues 26-27 (QP) and Gly34. 1D-myo-inositol 3-phosphate is bound by residues 31-36 (DAGGMN), Lys89, Tyr122, Thr146, and Arg166. UDP-N-acetyl-alpha-D-glucosamine is bound by residues Arg240, Lys245, and Met306. Residues Tyr315, Arg316, and Ala318 each coordinate Mg(2+). The UDP-N-acetyl-alpha-D-glucosamine site is built by Glu328 and Glu336. Residue Thr342 participates in Mg(2+) binding.

It belongs to the glycosyltransferase group 1 family. MshA subfamily. As to quaternary structure, homodimer.

The enzyme catalyses 1D-myo-inositol 3-phosphate + UDP-N-acetyl-alpha-D-glucosamine = 1D-myo-inositol 2-acetamido-2-deoxy-alpha-D-glucopyranoside 3-phosphate + UDP + H(+). Its function is as follows. Catalyzes the transfer of a N-acetyl-glucosamine moiety to 1D-myo-inositol 3-phosphate to produce 1D-myo-inositol 2-acetamido-2-deoxy-glucopyranoside 3-phosphate in the mycothiol biosynthesis pathway. This is D-inositol 3-phosphate glycosyltransferase from Kribbella flavida (strain DSM 17836 / JCM 10339 / NBRC 14399).